Reading from the N-terminus, the 646-residue chain is Beta-mannosyltransferase 6 (646 aa).

Residues 1 to 25 (MGNYKPSIKQYVVTVKAIKSSQFGR) lie on the Cytoplasmic side of the membrane. Residues 26-46 (LGICAVVLLFVLGYPFYFISN) traverse the membrane as a helical segment. Topologically, residues 47–646 (NPFDTSIRYQ…LTGGWLPSHN (600 aa)) are extracellular. Asn62, Asn81, Asn103, Asn117, Asn127, Asn132, Asn146, Asn334, and Asn393 each carry an N-linked (GlcNAc...) asparagine glycan.

The protein belongs to the BMT family.

It localises to the membrane. Its function is as follows. Beta-mannosyltransferase involved in cell wall biosynthesis. Required for beta-1,2-mannose transfer on phospholipomannan. Required for pro-inflammatory response in macrophages through phospholipomannan-induced TNF-alpha production. This Candida albicans (strain SC5314 / ATCC MYA-2876) (Yeast) protein is Beta-mannosyltransferase 6 (BMT6).